Reading from the N-terminus, the 637-residue chain is Early transcription factor 70 kDa subunit (637 aa).

Positions 32 to 185 (RTIIDENRSV…GHIIDLMSEE (154 aa)) constitute a Helicase ATP-binding domain. Residue 45–52 (HIMGSGKT) participates in ATP binding. The short motif at 135 to 138 (DEAH) is the DEXH box element. The Helicase C-terminal domain maps to 327–507 (KFKYFINRIQ…VLPFDIKKLL (181 aa)).

Belongs to the helicase family. VETF subfamily. In terms of assembly, heterodimer of a 70 kDa and a 82 kDa subunit. Part of the early transcription complex composed of ETF, RAP94/OPG109, and the DNA-directed RNA polymerase.

The protein localises to the virion. Functionally, acts with RNA polymerase to initiate transcription from early gene promoters. Is recruited by the RPO-associated protein of 94 kDa RAP94/OPG109 to form the early transcription complex, which also contains the core RNA polymerase. ETF heterodimer binds to early gene promoters. The polypeptide is Early transcription factor 70 kDa subunit (OPG118) (Homo sapiens (Human)).